Here is a 209-residue protein sequence, read N- to C-terminus: ATP-dependent Clp protease proteolytic subunit (209 aa).

The active-site Nucleophile is the S103. The active site involves H128.

It belongs to the peptidase S14 family. Fourteen ClpP subunits assemble into 2 heptameric rings which stack back to back to give a disk-like structure with a central cavity, resembling the structure of eukaryotic proteasomes.

Its subcellular location is the cytoplasm. It catalyses the reaction Hydrolysis of proteins to small peptides in the presence of ATP and magnesium. alpha-casein is the usual test substrate. In the absence of ATP, only oligopeptides shorter than five residues are hydrolyzed (such as succinyl-Leu-Tyr-|-NHMec, and Leu-Tyr-Leu-|-Tyr-Trp, in which cleavage of the -Tyr-|-Leu- and -Tyr-|-Trp bonds also occurs).. Cleaves peptides in various proteins in a process that requires ATP hydrolysis. Has a chymotrypsin-like activity. Plays a major role in the degradation of misfolded proteins. The protein is ATP-dependent Clp protease proteolytic subunit of Lawsonia intracellularis (strain PHE/MN1-00).